The sequence spans 445 residues: Methylenetetrahydrofolate--tRNA-(uracil-5-)-methyltransferase TrmFO (445 aa).

10 to 15 (GGGLSG) serves as a coordination point for FAD.

Belongs to the MnmG family. TrmFO subfamily. FAD serves as cofactor.

The protein resides in the cytoplasm. The enzyme catalyses uridine(54) in tRNA + (6R)-5,10-methylene-5,6,7,8-tetrahydrofolate + NADH + H(+) = 5-methyluridine(54) in tRNA + (6S)-5,6,7,8-tetrahydrofolate + NAD(+). It catalyses the reaction uridine(54) in tRNA + (6R)-5,10-methylene-5,6,7,8-tetrahydrofolate + NADPH + H(+) = 5-methyluridine(54) in tRNA + (6S)-5,6,7,8-tetrahydrofolate + NADP(+). In terms of biological role, catalyzes the folate-dependent formation of 5-methyl-uridine at position 54 (M-5-U54) in all tRNAs. The protein is Methylenetetrahydrofolate--tRNA-(uracil-5-)-methyltransferase TrmFO of Lawsonia intracellularis (strain PHE/MN1-00).